A 297-amino-acid polypeptide reads, in one-letter code: Small ribosomal subunit biogenesis GTPase RsgA (297 aa).

In terms of domain architecture, CP-type G spans 65 to 223 (TNEIGRPAVA…IADTPGFSAI (159 aa)). Residues 114 to 117 (SKAD) and 166 to 174 (GQSGAGKST) contribute to the GTP site. Residues cysteine 247, cysteine 252, histidine 254, and cysteine 260 each coordinate Zn(2+).

It belongs to the TRAFAC class YlqF/YawG GTPase family. RsgA subfamily. As to quaternary structure, monomer. Associates with 30S ribosomal subunit, binds 16S rRNA. It depends on Zn(2+) as a cofactor.

Its subcellular location is the cytoplasm. One of several proteins that assist in the late maturation steps of the functional core of the 30S ribosomal subunit. Helps release RbfA from mature subunits. May play a role in the assembly of ribosomal proteins into the subunit. Circularly permuted GTPase that catalyzes slow GTP hydrolysis, GTPase activity is stimulated by the 30S ribosomal subunit. The chain is Small ribosomal subunit biogenesis GTPase RsgA from Lactobacillus gasseri (strain ATCC 33323 / DSM 20243 / BCRC 14619 / CIP 102991 / JCM 1131 / KCTC 3163 / NCIMB 11718 / NCTC 13722 / AM63).